Reading from the N-terminus, the 116-residue chain is uncharacterized protein (116 aa).

This is an uncharacterized protein from Archaeoglobus fulgidus (strain ATCC 49558 / DSM 4304 / JCM 9628 / NBRC 100126 / VC-16).